Here is a 201-residue protein sequence, read N- to C-terminus: Pyridoxal 5'-phosphate synthase subunit PdxT (201 aa).

L-glutamine is bound at residue 48 to 50 (GES). Residue C80 is the Nucleophile of the active site. Residues R109 and 137-138 (IR) each bind L-glutamine. Active-site charge relay system residues include H180 and E182.

This sequence belongs to the glutaminase PdxT/SNO family. In the presence of PdxS, forms a dodecamer of heterodimers. Only shows activity in the heterodimer.

It catalyses the reaction aldehydo-D-ribose 5-phosphate + D-glyceraldehyde 3-phosphate + L-glutamine = pyridoxal 5'-phosphate + L-glutamate + phosphate + 3 H2O + H(+). It carries out the reaction L-glutamine + H2O = L-glutamate + NH4(+). The protein operates within cofactor biosynthesis; pyridoxal 5'-phosphate biosynthesis. Its function is as follows. Catalyzes the hydrolysis of glutamine to glutamate and ammonia as part of the biosynthesis of pyridoxal 5'-phosphate. The resulting ammonia molecule is channeled to the active site of PdxS. This is Pyridoxal 5'-phosphate synthase subunit PdxT from Cutibacterium acnes (strain DSM 16379 / KPA171202) (Propionibacterium acnes).